We begin with the raw amino-acid sequence, 864 residues long: Eukaryotic translation initiation factor 3 subunit C (864 aa).

Residues 1–77 (MSRFFARGGS…EESEDEERVT (77 aa)) are disordered. The span at 14 to 54 (SSSEDEQELYSDREEEEQFSDSEEESSEAESSEEESSDDEG) shows a compositional bias: acidic residues. The PCI domain occupies 602–776 (FHMHINLELL…NAIVFRKGVE (175 aa)). The disordered stretch occupies residues 815 to 864 (RDQGAGARGGRGAGRGGQARGGPRFPGGQQGRRPGGQQFSGGALGGAIKA). Positions 820-864 (GARGGRGAGRGGQARGGPRFPGGQQGRRPGGQQFSGGALGGAIKA) are enriched in gly residues.

It belongs to the eIF-3 subunit C family. In terms of assembly, component of the eukaryotic translation initiation factor 3 (eIF-3) complex.

It localises to the cytoplasm. Functionally, component of the eukaryotic translation initiation factor 3 (eIF-3) complex, which is involved in protein synthesis of a specialized repertoire of mRNAs and, together with other initiation factors, stimulates binding of mRNA and methionyl-tRNAi to the 40S ribosome. The eIF-3 complex specifically targets and initiates translation of a subset of mRNAs involved in cell proliferation. This chain is Eukaryotic translation initiation factor 3 subunit C (nip1), found in Aspergillus terreus (strain NIH 2624 / FGSC A1156).